The chain runs to 502 residues: ATP synthase subunit alpha (502 aa).

Residue 169 to 176 participates in ATP binding; sequence GDKQTGKT.

Belongs to the ATPase alpha/beta chains family. In terms of assembly, F-type ATPases have 2 components, CF(1) - the catalytic core - and CF(0) - the membrane proton channel. CF(1) has five subunits: alpha(3), beta(3), gamma(1), delta(1), epsilon(1). CF(0) has three main subunits: a(1), b(2) and c(9-12). The alpha and beta chains form an alternating ring which encloses part of the gamma chain. CF(1) is attached to CF(0) by a central stalk formed by the gamma and epsilon chains, while a peripheral stalk is formed by the delta and b chains.

Its subcellular location is the cell membrane. It catalyses the reaction ATP + H2O + 4 H(+)(in) = ADP + phosphate + 5 H(+)(out). Functionally, produces ATP from ADP in the presence of a proton gradient across the membrane. The alpha chain is a regulatory subunit. This is ATP synthase subunit alpha from Lachnoclostridium phytofermentans (strain ATCC 700394 / DSM 18823 / ISDg) (Clostridium phytofermentans).